The sequence spans 167 residues: NADH-quinone oxidoreductase subunit B 2 (167 aa).

Positions 38, 39, 103, and 132 each coordinate [4Fe-4S] cluster.

Belongs to the complex I 20 kDa subunit family. As to quaternary structure, NDH-1 is composed of 14 different subunits. Subunits NuoB, C, D, E, F, and G constitute the peripheral sector of the complex. [4Fe-4S] cluster is required as a cofactor.

It localises to the cell inner membrane. It carries out the reaction a quinone + NADH + 5 H(+)(in) = a quinol + NAD(+) + 4 H(+)(out). NDH-1 shuttles electrons from NADH, via FMN and iron-sulfur (Fe-S) centers, to quinones in the respiratory chain. The immediate electron acceptor for the enzyme in this species is believed to be ubiquinone. Couples the redox reaction to proton translocation (for every two electrons transferred, four hydrogen ions are translocated across the cytoplasmic membrane), and thus conserves the redox energy in a proton gradient. The polypeptide is NADH-quinone oxidoreductase subunit B 2 (Rhizobium meliloti (strain 1021) (Ensifer meliloti)).